The chain runs to 782 residues: Probable transcription factor claV (782 aa).

5 disordered regions span residues 1 to 37 (MPPR…VAKR), 49 to 128 (ALLT…GKDE), 156 to 180 (KSTS…NLTH), 717 to 745 (AGVG…PMPV), and 758 to 782 (GNTV…GGVD). Residues 70-79 (RKTKKKKKKG) are compositionally biased toward basic residues. Over residues 86–102 (QTPVMTEPPQSSRTSPN) the composition is skewed to polar residues. The segment covering 157–166 (STSAGASGSS) has biased composition (low complexity). The span at 723–740 (ADEDDEVEDDDEDEDEEV) shows a compositional bias: acidic residues.

Its subcellular location is the nucleus. It participates in secondary metabolite biosynthesis; terpenoid biosynthesis. Functionally, probable transcription factor; part of the gene cluster that mediates the biosynthesis of clavilactone A, a meroterpenoid that features a unique benzo-fused ten-membered carbocyclic ring unit with an alpha,beta-epoxy-gamma-lactone moiety, forming an intriguing 10/5/3 tricyclic nested skeleton. The polypeptide is Probable transcription factor claV (Ampulloclitocybe clavipes (Club foot)).